We begin with the raw amino-acid sequence, 65 residues long: LICVKEKFLFSETTETCPDGQNVCFNQAHLIYPGKYKRTRGCAATCPKLQNRDVIFCCSTDKCNL.

Disulfide bonds link C3-C24, C17-C42, C46-C57, and C58-C63.

This sequence belongs to the three-finger toxin family. Short-chain subfamily. Type C muscarinic toxin sub-subfamily. In terms of assembly, monomer. Expressed by the venom gland.

The protein resides in the secreted. In terms of biological role, binds weakly to the muscarinic acetylcholine receptor (CHRM). The sequence is that of Muscarinic toxin-like protein 1 from Naja kaouthia (Monocled cobra).